The following is a 269-amino-acid chain: 4-hydroxy-4-methyl-2-oxoglutarate aldolase cghB (269 aa).

H48 functions as the Proton acceptor in the catalytic mechanism. A divalent metal cation is bound by residues E155 and D181. D181 provides a ligand contact to substrate.

This sequence belongs to the HpcH/HpaI aldolase family. In terms of assembly, homohexamer; trimer of dimers. Requires Co(2+) as cofactor. Mn(2+) serves as cofactor. Zn(2+) is required as a cofactor. It depends on Fe(2+) as a cofactor. The cofactor is Mg(2+).

It carries out the reaction 4-hydroxy-4-methyl-2-oxoglutarate = 2 pyruvate. Its pathway is secondary metabolite biosynthesis. Its function is as follows. 4-hydroxy-4-methyl-2-oxoglutarate aldolase; part of the gene cluster that mediates the biosynthesis of the tetramic acid Sch210972, a potential anti-HIV fungal natural product that contains a decalin core. The PKS module of cghG together with the enoylreductase cghC catalyze the formation of the polyketide unit which is then conjugated to 4-hydroxyl-4-methyl glutamate (HMG) by the condensation domain of the cghG NRPS module. One unique structural feature of Sch210972 is the tetramic acid motif proposed to be derived from the non-proteinogenic amino acid HMG, by a Dieckmann-type condensation catalyzed by the reductase domain of cghG. The aldolase cghB catalyzes the aldol condensation of 2 molecules of pyruvic acid to yield the intermediate 4-hydroxyl-4-methyl-2-oxoglutarate (HMOG), which can then be stereoselectively transaminated by an unidentified enzyme to form HMG. The Diels-Alderase cghA then uses the Dieckmann product released by cghG as substrate and catalyzes the Diels-Alder cycloaddition to form the decalin ring of Sch210972. CghA also suppresses the nonenzymatic formation of the alternative stereoisomer. The chain is 4-hydroxy-4-methyl-2-oxoglutarate aldolase cghB from Chaetomium globosum (strain ATCC 6205 / CBS 148.51 / DSM 1962 / NBRC 6347 / NRRL 1970) (Soil fungus).